The primary structure comprises 263 residues: Thiazole synthase (263 aa).

The Schiff-base intermediate with DXP role is filled by K102. 1-deoxy-D-xylulose 5-phosphate is bound by residues G164, 190-191, and 212-213; these read AG and NT.

Belongs to the ThiG family. Homotetramer. Forms heterodimers with either ThiH or ThiS.

It localises to the cytoplasm. The enzyme catalyses [ThiS sulfur-carrier protein]-C-terminal-Gly-aminoethanethioate + 2-iminoacetate + 1-deoxy-D-xylulose 5-phosphate = [ThiS sulfur-carrier protein]-C-terminal Gly-Gly + 2-[(2R,5Z)-2-carboxy-4-methylthiazol-5(2H)-ylidene]ethyl phosphate + 2 H2O + H(+). It functions in the pathway cofactor biosynthesis; thiamine diphosphate biosynthesis. Functionally, catalyzes the rearrangement of 1-deoxy-D-xylulose 5-phosphate (DXP) to produce the thiazole phosphate moiety of thiamine. Sulfur is provided by the thiocarboxylate moiety of the carrier protein ThiS. In vitro, sulfur can be provided by H(2)S. This is Thiazole synthase from Helicobacter hepaticus (strain ATCC 51449 / 3B1).